The chain runs to 230 residues: uncharacterized protein (230 aa).

Residues 1–16 form the signal peptide; that stretch reads MTCVNVCFFLFPPCHR. Transmembrane regions (helical) follow at residues 27 to 47, 118 to 138, 150 to 170, and 172 to 191; these read VDLL…IPLI, LFFF…FLFF, FPIL…LSFL, and SLSH…LRVF.

It is found in the cytoplasm. The protein resides in the nucleus membrane. This is an uncharacterized protein from Schizosaccharomyces pombe (strain 972 / ATCC 24843) (Fission yeast).